The chain runs to 391 residues: uncharacterized protein (391 aa).

This sequence belongs to the mycobacterial PPE family.

This is an uncharacterized protein from Mycobacterium tuberculosis (strain CDC 1551 / Oshkosh).